The sequence spans 411 residues: Putative metal tolerance protein C3 (411 aa).

The Cytoplasmic segment spans residues 1–115 (MEVNYCPETP…DRAERAAQEL (115 aa)). A helical transmembrane segment spans residues 116–136 (AMQISNWANIFLLALKIYATV). Over 137–140 (KSGS) the chain is Vacuolar. A helical membrane pass occupies residues 141 to 161 (IAIAASTLDSLLDLMAGGILW). The Cytoplasmic portion of the chain corresponds to 162-184 (FTHLSMKNVNIYKYPIGKLRVQP). Residues 185 to 205 (VGIIIFAAVMATLGFQVLLVA) form a helical membrane-spanning segment. Residues 206 to 222 (AEQLISNEPSEKMNHVQ) are Vacuolar-facing. The helical transmembrane segment at 223–243 (LIWLYSIMLSATAIKLVLWIY) threads the bilayer. Topologically, residues 244 to 262 (CKSSRNHIVRAYAKDHHFD) are cytoplasmic. A helical membrane pass occupies residues 263–283 (VVTNVLGLVAAVLANAFYWWL). Residues 284–287 (DPTG) are Vacuolar-facing. A helical transmembrane segment spans residues 288-308 (AILLAIYTIVNWSGTVMENAV). Residues 309–390 (SLIGQSAPPE…LPEVERAFVH (82 aa)) lie on the Cytoplasmic side of the membrane.

The protein belongs to the cation diffusion facilitator (CDF) transporter (TC 2.A.4) family.

The protein resides in the vacuole membrane. Involved in sequestration of excess metal in the cytoplasm into vacuoles to maintain metal homeostasis. This chain is Putative metal tolerance protein C3 (MTPC3), found in Arabidopsis thaliana (Mouse-ear cress).